A 110-amino-acid chain; its full sequence is Nucleoid-associated protein Mvan_5528 (110 aa).

It belongs to the YbaB/EbfC family. Homodimer.

Its subcellular location is the cytoplasm. It is found in the nucleoid. Its function is as follows. Binds to DNA and alters its conformation. May be involved in regulation of gene expression, nucleoid organization and DNA protection. In Mycolicibacterium vanbaalenii (strain DSM 7251 / JCM 13017 / BCRC 16820 / KCTC 9966 / NRRL B-24157 / PYR-1) (Mycobacterium vanbaalenii), this protein is Nucleoid-associated protein Mvan_5528.